A 537-amino-acid chain; its full sequence is Putative cysteine ligase BshC (537 aa).

The stretch at 422–450 forms a coiled coil; that stretch reads IEKVEGMIEQQRRLNKDLLDEVAGNQNNI.

This sequence belongs to the BshC family.

Involved in bacillithiol (BSH) biosynthesis. May catalyze the last step of the pathway, the addition of cysteine to glucosamine malate (GlcN-Mal) to generate BSH. This chain is Putative cysteine ligase BshC, found in Staphylococcus aureus (strain Mu3 / ATCC 700698).